The following is a 384-amino-acid chain: Lipid-A-disaccharide synthase (384 aa).

Belongs to the LpxB family.

The catalysed reaction is a lipid X + a UDP-2-N,3-O-bis[(3R)-3-hydroxyacyl]-alpha-D-glucosamine = a lipid A disaccharide + UDP + H(+). The protein operates within bacterial outer membrane biogenesis; LPS lipid A biosynthesis. Condensation of UDP-2,3-diacylglucosamine and 2,3-diacylglucosamine-1-phosphate to form lipid A disaccharide, a precursor of lipid A, a phosphorylated glycolipid that anchors the lipopolysaccharide to the outer membrane of the cell. The polypeptide is Lipid-A-disaccharide synthase (lpxB) (Neisseria meningitidis serogroup B (strain ATCC BAA-335 / MC58)).